The sequence spans 115 residues: Large ribosomal subunit protein bL19 (115 aa).

This sequence belongs to the bacterial ribosomal protein bL19 family.

Functionally, this protein is located at the 30S-50S ribosomal subunit interface and may play a role in the structure and function of the aminoacyl-tRNA binding site. The chain is Large ribosomal subunit protein bL19 from Francisella tularensis subsp. tularensis (strain WY96-3418).